The primary structure comprises 217 residues: UPF0502 protein ESA_02280 (217 aa).

Belongs to the UPF0502 family.

This chain is UPF0502 protein ESA_02280, found in Cronobacter sakazakii (strain ATCC BAA-894) (Enterobacter sakazakii).